Reading from the N-terminus, the 233-residue chain is Apoptosis regulator Bcl-2 (233 aa).

Residues D10 to W30 carry the BH4 motif. A disordered region spans residues A32–G86. Residues V87–R101 carry the BH3 motif. The BH1 signature appears at E130 to G149. Residues N181–Y196 carry the BH2 motif. The chain crosses the membrane as a helical span at residues W208 to A228.

Belongs to the Bcl-2 family. In terms of assembly, forms homodimers, and heterodimers with BAX, BAD, BAK and Bcl-X(L). Heterodimerization with BAX requires intact BH1 and BH2 motifs, and is necessary for anti-apoptotic activity. Also interacts with APAF1 and RAF-1. In adult chicken expressed, in thymus, spleen, kidney, heart, ovary and brain, with the highest levels in the thymus. In the embryo, highly levels expressed in all tissues with high levels in the bursa of Fabricius.

Its subcellular location is the mitochondrion outer membrane. It localises to the nucleus membrane. The protein resides in the endoplasmic reticulum membrane. The protein localises to the cytoplasm. Suppresses apoptosis in a variety of cell systems including factor-dependent lymphohematopoietic and neural cells. Regulates cell death by controlling the mitochondrial membrane permeability. Appears to function in a feedback loop system with caspases. Inhibits caspase activity either by preventing the release of cytochrome c from the mitochondria and/or by binding to the apoptosis-activating factor (APAF-1). The protein is Apoptosis regulator Bcl-2 (BCL2) of Gallus gallus (Chicken).